A 314-amino-acid polypeptide reads, in one-letter code: Coproporphyrin III ferrochelatase (314 aa).

Fe(2+)-binding residues include His-186 and Glu-268.

It belongs to the ferrochelatase family.

The protein resides in the cytoplasm. It carries out the reaction Fe-coproporphyrin III + 2 H(+) = coproporphyrin III + Fe(2+). Its pathway is porphyrin-containing compound metabolism; protoheme biosynthesis. Functionally, involved in coproporphyrin-dependent heme b biosynthesis. Catalyzes the insertion of ferrous iron into coproporphyrin III to form Fe-coproporphyrin III. The polypeptide is Coproporphyrin III ferrochelatase (Lactococcus lactis subsp. lactis (strain IL1403) (Streptococcus lactis)).